A 643-amino-acid polypeptide reads, in one-letter code: UvrABC system protein C (643 aa).

The GIY-YIG domain maps to 25 to 104 (AEPGVYFMRD…IKQHQPHFNV (80 aa)). Residues 214–249 (SELVELLEAQMLQAAENLEFEKAAKIRDQIRGLEGL) enclose the UVR domain.

The protein belongs to the UvrC family. In terms of assembly, interacts with UvrB in an incision complex.

The protein localises to the cytoplasm. In terms of biological role, the UvrABC repair system catalyzes the recognition and processing of DNA lesions. UvrC both incises the 5' and 3' sides of the lesion. The N-terminal half is responsible for the 3' incision and the C-terminal half is responsible for the 5' incision. This Synechococcus elongatus (strain ATCC 33912 / PCC 7942 / FACHB-805) (Anacystis nidulans R2) protein is UvrABC system protein C.